The following is a 150-amino-acid chain: Large ribosomal subunit protein bL17 (150 aa).

The interval Asp-126–Glu-150 is disordered.

Belongs to the bacterial ribosomal protein bL17 family. In terms of assembly, part of the 50S ribosomal subunit. Contacts protein L32.

The sequence is that of Large ribosomal subunit protein bL17 from Solibacter usitatus (strain Ellin6076).